The following is a 435-amino-acid chain: 3-phosphoshikimate 1-carboxyvinyltransferase (435 aa).

3-phosphoshikimate contacts are provided by lysine 22, serine 23, and arginine 27. Lysine 22 is a binding site for phosphoenolpyruvate. Phosphoenolpyruvate-binding residues include glycine 95 and arginine 123. 3-phosphoshikimate is bound by residues serine 168, glutamine 170, aspartate 319, and lysine 346. Phosphoenolpyruvate is bound at residue glutamine 170. Aspartate 319 functions as the Proton acceptor in the catalytic mechanism. Residues arginine 350 and arginine 393 each contribute to the phosphoenolpyruvate site.

Belongs to the EPSP synthase family. In terms of assembly, monomer.

It is found in the cytoplasm. It carries out the reaction 3-phosphoshikimate + phosphoenolpyruvate = 5-O-(1-carboxyvinyl)-3-phosphoshikimate + phosphate. It functions in the pathway metabolic intermediate biosynthesis; chorismate biosynthesis; chorismate from D-erythrose 4-phosphate and phosphoenolpyruvate: step 6/7. In terms of biological role, catalyzes the transfer of the enolpyruvyl moiety of phosphoenolpyruvate (PEP) to the 5-hydroxyl of shikimate-3-phosphate (S3P) to produce enolpyruvyl shikimate-3-phosphate and inorganic phosphate. In Chloroflexus aggregans (strain MD-66 / DSM 9485), this protein is 3-phosphoshikimate 1-carboxyvinyltransferase.